The following is a 282-amino-acid chain: Ribonuclease 3 (282 aa).

Positions 18–141 (FVAFFKSLNI…LVAAIYEDLG (124 aa)) constitute an RNase III domain. Glu-59 is a binding site for Mg(2+). Residue Asp-63 is part of the active site. Mg(2+) contacts are provided by Asp-127 and Glu-130. The active site involves Glu-130.

Belongs to the ribonuclease III family. As to quaternary structure, homodimer. Mg(2+) serves as cofactor.

The protein localises to the cytoplasm. It carries out the reaction Endonucleolytic cleavage to 5'-phosphomonoester.. Its function is as follows. Digests double-stranded RNA. Involved in the processing of primary rRNA transcript to yield the immediate precursors to the large and small rRNAs (23S and 16S). Processes some mRNAs, and tRNAs when they are encoded in the rRNA operon. Processes pre-crRNA and tracrRNA of type II CRISPR loci if present in the organism. The chain is Ribonuclease 3 from Mycoplasmoides pneumoniae (strain ATCC 15531 / DSM 23978 / CIP 103766 / NBRC 14401 / NCTC 10119 / FH) (Mycoplasma pneumoniae).